Reading from the N-terminus, the 120-residue chain is C-type natriuretic peptide 4 (120 aa).

A signal peptide spans 1–22; that stretch reads MNLSYLVACGLMITLLSVRMGA. Residues 23-96 constitute a propeptide that is removed on maturation; sequence KPLSQAQQKS…PRRHKTGIKK (74 aa). A disulfide bridge links cysteine 104 with cysteine 120.

This sequence belongs to the natriuretic peptide family.

Its subcellular location is the secreted. Its function is as follows. Exhibits natriuretic and vasodepressant activity. Has cGMP-stimulating activity. May help to regulate body fluid homeostasis in a variety of aquatic environments. This is C-type natriuretic peptide 4 from Takifugu rubripes (Japanese pufferfish).